Reading from the N-terminus, the 172-residue chain is Ribosome maturation factor RimM (172 aa).

The region spanning 96–168 (EGEFYYHQII…RVDVELMEGL (73 aa)) is the PRC barrel domain.

It belongs to the RimM family. In terms of assembly, binds ribosomal protein uS19.

The protein resides in the cytoplasm. Its function is as follows. An accessory protein needed during the final step in the assembly of 30S ribosomal subunit, possibly for assembly of the head region. Essential for efficient processing of 16S rRNA. May be needed both before and after RbfA during the maturation of 16S rRNA. It has affinity for free ribosomal 30S subunits but not for 70S ribosomes. This Streptococcus pyogenes serotype M18 (strain MGAS8232) protein is Ribosome maturation factor RimM.